The sequence spans 406 residues: MNKLFVGSEIGQLRRVILHRPERALSHLTPTNCHNLLFDDVLSVEKALLEHDQFVKTLENQDVDVLLLQDLLEQTLENPEAKEWLLKHQISHYRFGPTFANQIRVFLLEHSNKELASILLGGLAFIELPFKAPSMLQQLSDPFDFVIAPLPNHLFTRDTSCWIYGGVSINPMAKAARKRESNHLRAIYRWHPLFSHHDFARYFEDENRYYDNATIEGGDVLVIGKGNVLVGISERTTPQGIENLAKQLFRTHQAKQVIAIKLPEDRSCMHLDTVMTHMDHNVFSVYPRVIDKNMGCWSITPCGEQHLDIKEMPNFQNVLMSALELDNLNIITTGGDSYEAEREQWHDANNVLTIKPGVVVAYERNTYTNEKYDKAGIHVLPITGDELGRGRGGARCMSCPIERDGI.

The active-site Amidino-cysteine intermediate is the C396.

The protein belongs to the arginine deiminase family.

The protein localises to the cytoplasm. It carries out the reaction L-arginine + H2O = L-citrulline + NH4(+). Its pathway is amino-acid degradation; L-arginine degradation via ADI pathway; carbamoyl phosphate from L-arginine: step 1/2. The polypeptide is Arginine deiminase (Aliivibrio fischeri (strain ATCC 700601 / ES114) (Vibrio fischeri)).